Here is a 798-residue protein sequence, read N- to C-terminus: Integrin beta-7 (798 aa).

Residues 1-19 (MVALPMVLVLLLVLSRGES) form the signal peptide. Topologically, residues 20 to 723 (ELDAKIPSTG…VRPQEKGADH (704 aa)) are extracellular. Positions 44 to 92 (SCQPAPSCQKCILSHPSCAWCKQLNFTASGEAEARRCARREELLARGCP) constitute a PSI domain. Intrachain disulfides connect Cys51–Cys476, Cys54–Cys80, Cys64–Cys91, Cys216–Cys223, Cys271–Cys311, Cys412–Cys428, and Cys448–Cys474. Asn68 carries an N-linked (GlcNAc...) asparagine glycan. A disordered region spans residues 98 to 124 (EPRGQQEVLQDQPLSQGARGEGATQLA). In terms of domain architecture, VWFA spans 150 to 389 (YPVDLYYLMD…QLIMDAYNSL (240 aa)). Mg(2+)-binding residues include Ser161 and Ser163. Residues Ser163, Asp166, Asp167, and Asp198 each contribute to the Ca(2+) site. Residues Asn254, Asp256, Pro258, and Glu259 each contribute to the Ca(2+) site. Glu259 serves as a coordination point for Mg(2+). N-linked (GlcNAc...) asparagine glycosylation is present at Asn279. The Ca(2+) site is built by Asp289 and Glu373. A glycan (N-linked (GlcNAc...) asparagine) is linked at Asn434. N-linked (GlcNAc...) asparagine glycosylation is present at Asn477. 19 disulfides stabilise this stretch: Cys478–Cys497, Cys488–Cys500, Cys502–Cys511, Cys513–Cys545, Cys527–Cys543, Cys537–Cys548, Cys550–Cys559, Cys561–Cys582, Cys566–Cys580, Cys574–Cys585, Cys587–Cys596, Cys598–Cys621, Cys605–Cys619, Cys613–Cys624, Cys626–Cys635, Cys638–Cys641, Cys645–Cys688, Cys651–Cys670, and Cys654–Cys666. I-EGF domains lie at 478–512 (CSDT…RLCE), 513–560 (CSVA…HLCE), 561–597 (CDDA…RACE), and 598–636 (CSGD…ALCD). Asn531 carries an N-linked (GlcNAc...) asparagine glycan. The N-linked (GlcNAc...) asparagine glycan is linked to Asn590. N-linked (GlcNAc...) asparagine glycosylation is found at Asn665 and Asn674. A helical membrane pass occupies residues 724–746 (TQAIVLGCVGGIVAVGLGLVLAY). Topologically, residues 747–798 (RLSVEIYDRREYSRFEKEQQQLNWKQDSNPLYKSAITTTINPRFQEADSPTL) are cytoplasmic. Tyr778 carries the phosphotyrosine; by Tyr-kinases modification.

This sequence belongs to the integrin beta chain family. As to quaternary structure, heterodimer of an alpha and a beta subunit. ITGB7/beta-7 associates with either ITGA4/alpha-4 or ITGAE/alpha-E. Integrin ITGA4/ITGB7 interacts with MADCAM1. Integrin ITGA4/ITGB7 interacts with VCAM1 and fibronectin. Interacts with FLNA (via filamin repeats 4, 9, 12, 17, 19, 21, and 23). (Microbial infection) May interact with HIV-1 gp120. As to expression, expressed in a variety of leukocyte lines.

It is found in the cell membrane. Integrin ITGA4/ITGB7 (alpha-4/beta-7) (Peyer patches-specific homing receptor LPAM-1) is an adhesion molecule that mediates lymphocyte migration and homing to gut-associated lymphoid tissue (GALT). Integrin ITGA4/ITGB7 interacts with the cell surface adhesion molecules MADCAM1 which is normally expressed by the vascular endothelium of the gastrointestinal tract. Also interacts with VCAM1 and fibronectin, an extracellular matrix component. It recognizes one or more domains within the alternatively spliced CS-1 region of fibronectin. Interactions involve the tripeptide L-D-T in MADCAM1, and L-D-V in fibronectin. Integrin ITGAE/ITGB7 (alpha-E/beta-7, HML-1) is a receptor for E-cadherin. In terms of biological role, (Microbial infection) Binds to HIV-1 gp120, thereby allowing the virus to enter GALT, which is thought to be the major trigger of AIDS disease. Interaction would involve a tripeptide L-D-I in HIV-1 gp120. This Homo sapiens (Human) protein is Integrin beta-7 (ITGB7).